Consider the following 434-residue polypeptide: Serine--tRNA ligase (434 aa).

237 to 239 (TAE) lines the L-serine pocket. Residue 268–270 (RAE) participates in ATP binding. Glu291 lines the L-serine pocket. 358–361 (EISS) is a binding site for ATP. Residue Ser393 participates in L-serine binding.

This sequence belongs to the class-II aminoacyl-tRNA synthetase family. Type-1 seryl-tRNA synthetase subfamily. As to quaternary structure, homodimer. The tRNA molecule binds across the dimer.

It localises to the cytoplasm. It carries out the reaction tRNA(Ser) + L-serine + ATP = L-seryl-tRNA(Ser) + AMP + diphosphate + H(+). The enzyme catalyses tRNA(Sec) + L-serine + ATP = L-seryl-tRNA(Sec) + AMP + diphosphate + H(+). It participates in aminoacyl-tRNA biosynthesis; selenocysteinyl-tRNA(Sec) biosynthesis; L-seryl-tRNA(Sec) from L-serine and tRNA(Sec): step 1/1. Functionally, catalyzes the attachment of serine to tRNA(Ser). Is also able to aminoacylate tRNA(Sec) with serine, to form the misacylated tRNA L-seryl-tRNA(Sec), which will be further converted into selenocysteinyl-tRNA(Sec). This Rhodopseudomonas palustris (strain ATCC BAA-98 / CGA009) protein is Serine--tRNA ligase.